The primary structure comprises 1430 residues: rRNA biogenesis protein RRP5 (1430 aa).

S1 motif domains lie at 74 to 160 (DMLV…LSLK), 176 to 238 (GFIF…CTCV), 261 to 329 (GSIV…LTLN), 447 to 511 (GDLV…VSNR), 531 to 592 (GNVY…LTLP), and 697 to 771 (QVGD…VSAK). The interval 1041-1145 (KITNGQKKTQ…AKEKAKAEIK (105 aa)) is disordered. Residues 1043–1053 (TNGQKKTQPLT) are compositionally biased toward polar residues. 2 stretches are compositionally biased toward basic and acidic residues: residues 1057–1082 (VKEK…KSET) and 1135–1145 (SAKEKAKAEIK). Residues 1119-1157 (LNVAETQKNAAKKKRLSAKEKAKAEIKEEQRLREIEERN) adopt a coiled-coil conformation. HAT repeat units follow at residues 1161–1193 (KARL…FLLS), 1195–1232 (TEIE…MELV), 1265–1297 (KRKD…AYFW), 1299–1333 (GKSD…LYAK), 1335–1367 (DNND…MLIK), and 1369–1404 (GLID…LEEN).

Its subcellular location is the nucleus. The protein localises to the nucleolus. In terms of biological role, involved in rRNA processing or maturation during ribosome biogenesis. The chain is rRNA biogenesis protein RRP5 from Drosophila melanogaster (Fruit fly).